The sequence spans 152 residues: MSINIKAVTDDNRAAILDLHVSQNQLSYIESTKVCLEDAKECHYYKPVGLYYEGDLVGFAMYGLFPEYDEDNKNGRVWLDRFFIDERYQGKGLGKKMLKALIQHLAELYKCKRIYLSIFENNIHAIRLYQRFGFQFNGELDFNGEKVMVKEL.

Positions 3-152 (INIKAVTDDN…NGEKVMVKEL (150 aa)) constitute an N-acetyltransferase domain. Acetyl-CoA-binding positions include 82–84 (FFI), 89–95 (QGKGLGK), and 122–131 (NIHAIRLYQR). The Proton donor role is filled by Y129.

Belongs to the acetyltransferase family.

It catalyses the reaction an alkane-alpha,omega-diamine + acetyl-CoA = an N-acetylalkane-alpha,omega-diamine + CoA + H(+). It carries out the reaction spermine + acetyl-CoA = N(1)-acetylspermine + CoA + H(+). The enzyme catalyses spermidine + acetyl-CoA = N(1)-acetylspermidine + CoA + H(+). Its pathway is amine and polyamine degradation; spermine degradation. The protein operates within amine and polyamine degradation; spermidine degradation. With respect to regulation, putrescine and N(8)-acetylspermidine are competitive inhibitors of spermidine acetylation. Functionally, acetylates both spermidine and spermine at primary propyl amine moieties, with spermine being the preferred substrate. The chain is Spermine/spermidine N(1)-acetyltransferase (bltD) from Bacillus subtilis (strain 168).